Here is a 357-residue protein sequence, read N- to C-terminus: (4E)-oxalomesaconate Delta-isomerase (357 aa).

Belongs to the PrpF family.

The enzyme catalyses (1E)-4-oxobut-1-ene-1,2,4-tricarboxylate = (3Z)-2-oxo-4-carboxy-3-hexenedioate. The protein operates within secondary metabolite metabolism; lignin degradation. Its function is as follows. Contributes to the degradation of lignin at the level of the protocatechuate 4,5-cleavage pathway. Catalyzes the isomerization of the double bond between C4 and C5 in (4E)-oxalomesaconate (OMA) to (3Z)-2-keto-4-carboxy-3-hexenedioate (KCH), where the double bond has migrated between C3 and C4 via a 1,3-allylic isomerization. This is (4E)-oxalomesaconate Delta-isomerase from Novosphingobium sp. (strain KA1) (Sphingomonas sp. (strain KA1)).